The primary structure comprises 875 residues: Alanine--tRNA ligase (875 aa).

4 residues coordinate Zn(2+): histidine 563, histidine 567, cysteine 665, and histidine 669.

It belongs to the class-II aminoacyl-tRNA synthetase family. Requires Zn(2+) as cofactor.

It is found in the cytoplasm. The enzyme catalyses tRNA(Ala) + L-alanine + ATP = L-alanyl-tRNA(Ala) + AMP + diphosphate. Its function is as follows. Catalyzes the attachment of alanine to tRNA(Ala) in a two-step reaction: alanine is first activated by ATP to form Ala-AMP and then transferred to the acceptor end of tRNA(Ala). Also edits incorrectly charged Ser-tRNA(Ala) and Gly-tRNA(Ala) via its editing domain. The sequence is that of Alanine--tRNA ligase from Desulfitobacterium hafniense (strain Y51).